A 157-amino-acid chain; its full sequence is MAPKPEPSRRIVADNRAARYHYTIEDTLEAGIALTGTEVKSLRGGKATIGEAYAGPSGTDLMLFNAYIPEYLEANRFNHDTKRPRRLLLHRRQINKLIGATQRQGYTVVPLKIYFNDKGRAKVELGLGKGKQAHDKREAVKERDWQRDRARLMRDRG.

Residues 126–157 form a disordered region; that stretch reads GLGKGKQAHDKREAVKERDWQRDRARLMRDRG. Residues 132–157 show a composition bias toward basic and acidic residues; that stretch reads QAHDKREAVKERDWQRDRARLMRDRG.

This sequence belongs to the SmpB family.

It localises to the cytoplasm. In terms of biological role, required for rescue of stalled ribosomes mediated by trans-translation. Binds to transfer-messenger RNA (tmRNA), required for stable association of tmRNA with ribosomes. tmRNA and SmpB together mimic tRNA shape, replacing the anticodon stem-loop with SmpB. tmRNA is encoded by the ssrA gene; the 2 termini fold to resemble tRNA(Ala) and it encodes a 'tag peptide', a short internal open reading frame. During trans-translation Ala-aminoacylated tmRNA acts like a tRNA, entering the A-site of stalled ribosomes, displacing the stalled mRNA. The ribosome then switches to translate the ORF on the tmRNA; the nascent peptide is terminated with the 'tag peptide' encoded by the tmRNA and targeted for degradation. The ribosome is freed to recommence translation, which seems to be the essential function of trans-translation. This is SsrA-binding protein from Methylobacterium radiotolerans (strain ATCC 27329 / DSM 1819 / JCM 2831 / NBRC 15690 / NCIMB 10815 / 0-1).